The following is a 323-amino-acid chain: Annexin A3 (323 aa).

Residue Ala2 is modified to N-acetylalanine. 4 Annexin repeats span residues 18–89 (FSPS…ALVT), 90–161 (APAL…TLAD), 173–245 (HLAK…AIVH), and 249–320 (NTPA…KICG). Lys177 carries the post-translational modification N6-acetyllysine. Residue Thr267 is modified to Phosphothreonine.

Belongs to the annexin family.

Inhibitor of phospholipase A2, also possesses anti-coagulant properties. In Mus musculus (Mouse), this protein is Annexin A3 (Anxa3).